The primary structure comprises 556 residues: Putative protein SPATA31F2P (556 aa).

2 disordered regions span residues 133-154 and 210-231; these read ALKA…SGSD and LPKT…WVSP. Residues 144–154 show a composition bias toward polar residues; it reads SGGQDNDSGSD.

It belongs to the SPATA31 family.

The sequence is that of Putative protein SPATA31F2P from Homo sapiens (Human).